We begin with the raw amino-acid sequence, 226 residues long: Protein TRI1 (226 aa).

The DEK-C domain maps to 1 to 56; it reads MADINKYIPMVDAILSVSNPDEISPKRVRKALQILYSVNLDSQRKLINELILERFG. The disordered stretch occupies residues 83 to 118; that stretch reads QKEEERPLRSTRKRKGKSESKSKRKKKKNDSPDSNS. Positions 91 to 110 are enriched in basic residues; sequence RSTRKRKGKSESKSKRKKKK. S113 carries the phosphoserine modification. Residues 119-195 form the SWIB/MDM2 domain; the sequence is ISVRKVLLSA…NKLLTKHLFN (77 aa). The span at 200 to 218 shows a compositional bias: basic and acidic residues; that stretch reads VKHEEEQKQTPEKEIKLEN. The segment at 200-226 is disordered; the sequence is VKHEEEQKQTPEKEIKLENESLPNLSG. Glycyl lysine isopeptide (Lys-Gly) (interchain with G-Cter in SUMO) cross-links involve residues K201 and K215. At S225 the chain carries Phosphoserine.

The protein resides in the cytoplasm. Its subcellular location is the nucleus. The protein localises to the nucleolus. Functionally, may be involved in transcription regulation. This is Protein TRI1 (TRI1) from Saccharomyces cerevisiae (strain ATCC 204508 / S288c) (Baker's yeast).